A 66-amino-acid polypeptide reads, in one-letter code: Sodium channel alpha-toxin Acra8 (66 aa).

In terms of domain architecture, LCN-type CS-alpha/beta spans 2-64 (RDGYIVDDKN…VPIKEKGRCN (63 aa)). Cystine bridges form between Cys12-Cys63, Cys16-Cys36, Cys22-Cys46, and Cys26-Cys48. At Asn64 the chain carries Asparagine amide. The propeptide occupies 65-66 (GR).

This sequence belongs to the long (4 C-C) scorpion toxin superfamily. Sodium channel inhibitor family. Alpha subfamily. As to expression, expressed by the venom gland.

The protein resides in the secreted. Its function is as follows. Alpha toxins bind voltage-independently at site-3 of sodium channels (Nav) and inhibit the inactivation of the activated channels, thereby blocking neuronal transmission. This is Sodium channel alpha-toxin Acra8 from Androctonus crassicauda (Arabian fat-tailed scorpion).